The sequence spans 637 residues: Sodium-dependent phosphate transport protein 2A (637 aa).

The Cytoplasmic portion of the chain corresponds to 1–103; the sequence is MMSYSERLGG…LAQVGTKLLK (103 aa). A phosphoserine mark is found at serine 14 and serine 34. Residues 104-125 traverse the membrane as a helical segment; that stretch reads VPLMLGFLYLFVCSLDVLSSAF. At 126 to 145 the chain is on the extracellular side; the sequence is QLAGGKVAGDIFKDNAILSN. Residues 146–163 traverse the membrane as a helical segment; it reads PVAGLVVGILVTVLVQSS. Topologically, residues 164–216 are cytoplasmic; that stretch reads STSTSIIVSMVSSGLLEVSSAIPIIMGSNIGTSVTNTIVALMQAGDRTDFRRA. Residues 217–236 traverse the membrane as a helical segment; it reads FAGATVHDCFNWLSVLVLLP. 2 disulfide bridges follow: cysteine 225-cysteine 520 and cysteine 306-cysteine 334. Residues 237–345 are Extracellular-facing; the sequence is LEAATGYLHH…HIFVDTGLPD (109 aa). 2 N-linked (GlcNAc...) asparagine glycosylation sites follow: asparagine 298 and asparagine 328. A helical membrane pass occupies residues 346–368; sequence LAVGLILLAGSLVVLCTCLILLV. At 369 to 410 the chain is on the cytoplasmic side; the sequence is KMLNSLLKGQVANVIQKVINTDFPAPFTWVTGYFAMVVGASM. A helical membrane pass occupies residues 411–434; that stretch reads TFVVQSSSVFTSAITPLIGLGVIS. Residues 435-464 lie on the Extracellular side of the membrane; it reads IERAYPLTLGSNIGTTTTAILAALASPREK. A helical membrane pass occupies residues 465–485; the sequence is LSSSFQIALCHFFFNISGILL. Over 486 to 511 the chain is Cytoplasmic; it reads WYPLPCTRLPIRMAKALGKRTAKYRW. The residue at position 506 (threonine 506) is a Phosphothreonine; by PKC. Residues 512–532 form a helical membrane-spanning segment; it reads FAVLYLLVCFLLLPSLVFGIS. Residues 533–537 lie on the Extracellular side of the membrane; the sequence is MAGWQ. The helical transmembrane segment at 538 to 559 threads the bilayer; the sequence is AMVGVGTPFGALLAFVVLVNVL. Residues 560–637 are Cytoplasmic-facing; the sequence is QSRSPGHLPK…LPAHHNATRL (78 aa). Position 605 is a phosphoserine (serine 605). At threonine 621 the chain carries Phosphothreonine. Serine 623 is modified (phosphoserine).

Belongs to the SLC34A transporter family. Interacts via its C-terminal region with NHERF4. Interacts with NHERF1. Interacts with TMEM174; regulates SLC34A1 internalization by PTH and FGF23. In terms of tissue distribution, kidney.

The protein localises to the apical cell membrane. It is found in the cell membrane. It catalyses the reaction 3 Na(+)(out) + phosphate(out) = 3 Na(+)(in) + phosphate(in). Transport activity is significantly increased in response to dietary phosphate deprivation. Its function is as follows. Involved in actively transporting phosphate into cells via Na(+) cotransport in the renal brush border membrane. The cotransport has a Na(+):Pi stoichiometry of 3:1 and is electrogenic. This is Sodium-dependent phosphate transport protein 2A from Rattus norvegicus (Rat).